Consider the following 277-residue polypeptide: uncharacterized protein (277 aa).

Helical transmembrane passes span Tyr37–Trp59, Leu63–Ile82, Met214–Ile236, and Trp246–Phe268.

Its subcellular location is the cell membrane. This is an uncharacterized protein from Bacillus anthracis.